We begin with the raw amino-acid sequence, 147 residues long: Hemoglobin subunit gamma (147 aa).

Residues 3 to 147 enclose the Globin domain; the sequence is HFTAEEKAVI…VAIALAHKYH (145 aa). Positions 64 and 93 each coordinate heme b.

This sequence belongs to the globin family. Heterotetramer of two alpha chains and two gamma chains in fetal hemoglobin (Hb F). As to expression, red blood cells.

Gamma chains make up the fetal hemoglobin F, in combination with alpha chains. In Eulemur fulvus fulvus (Brown lemur), this protein is Hemoglobin subunit gamma (HBG).